Here is a 296-residue protein sequence, read N- to C-terminus: Glycine--tRNA ligase alpha subunit (296 aa).

Belongs to the class-II aminoacyl-tRNA synthetase family. In terms of assembly, tetramer of two alpha and two beta subunits.

It localises to the cytoplasm. It carries out the reaction tRNA(Gly) + glycine + ATP = glycyl-tRNA(Gly) + AMP + diphosphate. This Prochlorococcus marinus (strain SARG / CCMP1375 / SS120) protein is Glycine--tRNA ligase alpha subunit.